Reading from the N-terminus, the 568-residue chain is Urease subunit alpha (568 aa).

Positions 130-568 (GGIDTHIHFI…LPMAQRYFLF (439 aa)) constitute a Urease domain. Residues His135, His137, and Lys218 each coordinate Ni(2+). Lys218 is modified (N6-carboxylysine). A substrate-binding site is contributed by His220. His247 and His273 together coordinate Ni(2+). His321 (proton donor) is an active-site residue. Residue Asp361 coordinates Ni(2+).

Belongs to the metallo-dependent hydrolases superfamily. Urease alpha subunit family. Heterotrimer of UreA (gamma), UreB (beta) and UreC (alpha) subunits. Three heterotrimers associate to form the active enzyme. The cofactor is Ni cation. Carboxylation allows a single lysine to coordinate two nickel ions.

It localises to the cytoplasm. It carries out the reaction urea + 2 H2O + H(+) = hydrogencarbonate + 2 NH4(+). It functions in the pathway nitrogen metabolism; urea degradation; CO(2) and NH(3) from urea (urease route): step 1/1. The sequence is that of Urease subunit alpha from Burkholderia multivorans (strain ATCC 17616 / 249).